Consider the following 184-residue polypeptide: Large ribosomal subunit protein uL5 (184 aa).

It belongs to the universal ribosomal protein uL5 family. In terms of assembly, part of the 50S ribosomal subunit; part of the 5S rRNA/L5/L18/L25 subcomplex. Contacts the 5S rRNA and the P site tRNA. Forms a bridge to the 30S subunit in the 70S ribosome.

In terms of biological role, this is one of the proteins that bind and probably mediate the attachment of the 5S RNA into the large ribosomal subunit, where it forms part of the central protuberance. In the 70S ribosome it contacts protein S13 of the 30S subunit (bridge B1b), connecting the 2 subunits; this bridge is implicated in subunit movement. Contacts the P site tRNA; the 5S rRNA and some of its associated proteins might help stabilize positioning of ribosome-bound tRNAs. The protein is Large ribosomal subunit protein uL5 of Pelagibacter ubique (strain HTCC1062).